The following is an 82-amino-acid chain: UPF0335 protein pRhico085 (82 aa).

Belongs to the UPF0335 family.

This is UPF0335 protein pRhico085 from Azospirillum brasilense.